Consider the following 956-residue polypeptide: Translation initiation factor IF-2 (956 aa).

A disordered region spans residues 68-357 (APEAAAPKAP…GVSVPRGDGN (290 aa)). 4 stretches are compositionally biased toward low complexity: residues 86–123 (AKPA…APAV), 141–156 (PGNN…PRAG), 164–175 (PAAAPASGAGRP), and 212–235 (GPRP…RPAA). Gly residues-rich tracts occupy residues 236 to 257 (GSGG…GGGN) and 276 to 324 (RGAG…GAGR). Over residues 325 to 334 (GKQRKSKRAK) the composition is skewed to basic residues. The tr-type G domain occupies 449–620 (ARPPVVTVMG…AVMLTADAAL (172 aa)). The G1 stretch occupies residues 458-465 (GHVDHGKT). GTP is bound at residue 458–465 (GHVDHGKT). The G2 stretch occupies residues 483 to 487 (GITQH). The tract at residues 508 to 511 (DTPG) is G3. Residues 508-512 (DTPGH) and 562-565 (NKID) contribute to the GTP site. Residues 562-565 (NKID) form a G4 region. Residues 598–600 (SAR) form a G5 region.

Belongs to the TRAFAC class translation factor GTPase superfamily. Classic translation factor GTPase family. IF-2 subfamily.

The protein resides in the cytoplasm. Functionally, one of the essential components for the initiation of protein synthesis. Protects formylmethionyl-tRNA from spontaneous hydrolysis and promotes its binding to the 30S ribosomal subunits. Also involved in the hydrolysis of GTP during the formation of the 70S ribosomal complex. The protein is Translation initiation factor IF-2 of Renibacterium salmoninarum (strain ATCC 33209 / DSM 20767 / JCM 11484 / NBRC 15589 / NCIMB 2235).